The primary structure comprises 218 residues: Small ribosomal subunit protein mS34 (218 aa).

Belongs to the mitochondrion-specific ribosomal protein mS34 family. As to quaternary structure, component of the mitochondrial ribosome small subunit (28S) which comprises a 12S rRNA and about 30 distinct proteins. Widely expressed (at protein liver).

It is found in the mitochondrion. Its function is as follows. Required for mitochondrial translation, plays a role in maintaining the stability of the small ribosomal subunit and the 12S rRNA that are required for mitoribosome formation. The polypeptide is Small ribosomal subunit protein mS34 (Mrps34) (Mus musculus (Mouse)).